Consider the following 511-residue polypeptide: Apolipoprotein N-acyltransferase (511 aa).

Transmembrane regions (helical) follow at residues 7 to 29 (PGWP…LAPF), 58 to 78 (GWWY…VSIH), 90 to 110 (LLML…AWLW), 125 to 145 (LAFA…LTGF), 163 to 183 (VPVG…ALLV), and 192 to 212 (GASL…GLYL). The CN hydrolase domain maps to 230–470 (IQGNIAQELK…QGILRGEVIP (241 aa)). Glu-269 (proton acceptor) is an active-site residue. Residue Lys-330 is part of the active site. Cys-382 serves as the catalytic Nucleophile. Residues 482-502 (VWPLAGLAGVLLLWALLGRQL) form a helical membrane-spanning segment.

This sequence belongs to the CN hydrolase family. Apolipoprotein N-acyltransferase subfamily.

The protein localises to the cell inner membrane. The enzyme catalyses N-terminal S-1,2-diacyl-sn-glyceryl-L-cysteinyl-[lipoprotein] + a glycerophospholipid = N-acyl-S-1,2-diacyl-sn-glyceryl-L-cysteinyl-[lipoprotein] + a 2-acyl-sn-glycero-3-phospholipid + H(+). Its pathway is protein modification; lipoprotein biosynthesis (N-acyl transfer). Its function is as follows. Catalyzes the phospholipid dependent N-acylation of the N-terminal cysteine of apolipoprotein, the last step in lipoprotein maturation. The sequence is that of Apolipoprotein N-acyltransferase from Pseudomonas aeruginosa (strain LESB58).